The following is a 279-amino-acid chain: Ribosomal RNA small subunit methyltransferase A (279 aa).

N25, L27, G52, E73, D98, and N120 together coordinate S-adenosyl-L-methionine.

This sequence belongs to the class I-like SAM-binding methyltransferase superfamily. rRNA adenine N(6)-methyltransferase family. RsmA subfamily.

It is found in the cytoplasm. The enzyme catalyses adenosine(1518)/adenosine(1519) in 16S rRNA + 4 S-adenosyl-L-methionine = N(6)-dimethyladenosine(1518)/N(6)-dimethyladenosine(1519) in 16S rRNA + 4 S-adenosyl-L-homocysteine + 4 H(+). Its function is as follows. Specifically dimethylates two adjacent adenosines (A1518 and A1519) in the loop of a conserved hairpin near the 3'-end of 16S rRNA in the 30S particle. May play a critical role in biogenesis of 30S subunits. This is Ribosomal RNA small subunit methyltransferase A from Magnetococcus marinus (strain ATCC BAA-1437 / JCM 17883 / MC-1).